A 541-amino-acid chain; its full sequence is MPKIIAYEEEARRGLERGMNQLAGAVKVTLGPKGRNVVLEKKWGVPAITNDGVSIAREIELEDPYEKIGAEMVKEVAKKTDEVAGDGTTTATVLAEALVHEGLRNVAAGANPIALKRGIELAVERVCGELANLSRELETKDQIASTASISAGGDTAIGQIIAEAMDKVGRDGVITVEESNTFGLELELTEGMRFDKGYISPYFITDQERMECVLEDPYILVANIKISLVKDLLPLLEKVMQAGRPLLVIAENVEGEALATLVVNKIRGTFRSVAVKAPGFGERRKAMLGDIAVLTGSQVISEEVGLRLENADLDLLGRARKVVVTKDDTTIIEGAGDPGRIAGRVSQIRSEIEKSDSDYDREKLQERLARLAGGVAVIKAGAATEVELKERKHRIEDAVRNAKAAVEEGIVPGGGVALLLASGAVFDGLEVAEDERTGAEMVRRALTEPLRQIAVNAGLEGGVVVEKVRNLQPGWGLDAATGEHVNMLEAGIIDPTKVTRSALQNAASIAGLFLTTEAVVAEKPEEKETAAAPAGGGGLEY.

ATP is bound by residues 29-32 (TLGP), 86-90 (DGTTT), glycine 414, 478-480 (DAA), and aspartate 494.

This sequence belongs to the chaperonin (HSP60) family. Forms a cylinder of 14 subunits composed of two heptameric rings stacked back-to-back. Interacts with the co-chaperonin GroES.

The protein localises to the cytoplasm. The catalysed reaction is ATP + H2O + a folded polypeptide = ADP + phosphate + an unfolded polypeptide.. Its function is as follows. Together with its co-chaperonin GroES, plays an essential role in assisting protein folding. The GroEL-GroES system forms a nano-cage that allows encapsulation of the non-native substrate proteins and provides a physical environment optimized to promote and accelerate protein folding. This Frankia casuarinae (strain DSM 45818 / CECT 9043 / HFP020203 / CcI3) protein is Chaperonin GroEL 2.